The sequence spans 342 residues: Replication factor C subunit 3 (342 aa).

An ATP-binding site is contributed by 63–70; that stretch reads GPPGTGKT.

Belongs to the activator 1 small subunits family. In terms of assembly, heteropentamer of subunits rfc1, rfc2, rfc3, rfc4 and rfc5 that forms a complex (RFC) with PCNA in the presence of ATP. Two other complexes exist where rfc1 can be replaced by either ctf18 or elg1 to form the ctf18-RFC or the elg1-RFC complexes respectively.

Its subcellular location is the nucleus. Functionally, the elongation of primed DNA templates by DNA polymerase delta and epsilon requires the action of the accessory proteins PCNA and activator 1. Subunit 3 binds ATP. Also involved in replication and DNA damage checkpoint controls, probably functioning as a checkpoint sensor. The sequence is that of Replication factor C subunit 3 (rfc3) from Schizosaccharomyces pombe (strain 972 / ATCC 24843) (Fission yeast).